Reading from the N-terminus, the 301-residue chain is Mitochondrial carnitine/acylcarnitine carrier protein (301 aa).

A2 is modified (N-acetylalanine). Residues 2–12 (AEEPKPISPLK) lie on the Cytoplasmic side of the membrane. Solcar repeat units follow at residues 8–99 (ISPL…GKRL), 108–196 (LTYP…LKNL), and 207–293 (LSVP…PMKI). Residues 13–31 (NLLAGGFGGVCLVFVGHPL) form a helical membrane-spanning segment. The Mitochondrial matrix portion of the chain corresponds to 32-73 (DTVKVRLQTQPPSLPGQPPMYSGTIDCFRKTLFREGITGLYR). Residues 74–93 (GMAAPIIGVTPMFAVCFFGF) form a helical membrane-spanning segment. Topologically, residues 94–112 (GLGKRLQQKSPEDELTYPQ) are cytoplasmic. The helical transmembrane segment at 113–131 (LFTAGMLSGVFTTGIMTPG) threads the bilayer. The Mitochondrial matrix segment spans residues 132 to 170 (ERIKCLLQIQASSGKNKYSGTLDCAKKLYQEFGIRGFYK). N6-acetyllysine is present on residues K148 and K157. Residue K170 is modified to N6-acetyllysine; alternate. K170 carries the N6-succinyllysine; alternate modification. Residues 171–190 (GTALTLMRDVPASGMYFMTY) form a helical membrane-spanning segment. Residues 191 to 211 (EWLKNLFTPQGKSVHDLSVPR) lie on the Cytoplasmic side of the membrane. A helical transmembrane segment spans residues 212–230 (VLVAGGFRGIFNWVVAIPP). Residues 231-267 (DVLKSRFQTAPPGKYPNGFRDVLRELIREEGVTSLYK) lie on the Mitochondrial matrix side of the membrane. The helical transmembrane segment at 268–287 (GFNAVMIRAFPANAACFLGF) threads the bilayer. The Cytoplasmic segment spans residues 288–301 (EIPMKILNWIAPNL).

This sequence belongs to the mitochondrial carrier (TC 2.A.29) family. In terms of processing, the N-terminus is blocked.

Its subcellular location is the mitochondrion inner membrane. It catalyses the reaction O-acetyl-(R)-carnitine(in) + (R)-carnitine(out) = O-acetyl-(R)-carnitine(out) + (R)-carnitine(in). The catalysed reaction is an O-acyl-(R)-carnitine(in) + (R)-carnitine(out) = an O-acyl-(R)-carnitine(out) + (R)-carnitine(in). It carries out the reaction O-propanoyl-(R)-carnitine(in) + (R)-carnitine(out) = O-propanoyl-(R)-carnitine(out) + (R)-carnitine(in). The enzyme catalyses O-hexadecanoyl-(R)-carnitine(in) + (R)-carnitine(out) = O-hexadecanoyl-(R)-carnitine(out) + (R)-carnitine(in). It catalyses the reaction O-octanoyl-(R)-carnitine(in) + (R)-carnitine(out) = O-octanoyl-(R)-carnitine(out) + (R)-carnitine(in). The catalysed reaction is (R)-carnitine(in) = (R)-carnitine(out). Its function is as follows. Mediates the electroneutral exchange of acylcarnitines (O-acyl-(R)-carnitine or L-acylcarnitine) of different acyl chain lengths (ranging from O-acetyl-(R)-carnitine to long-chain O-acyl-(R)-carnitines) with free carnitine ((R)-carnitine or L-carnitine) across the mitochondrial inner membrane, via a ping-pong mechanism. Key player in the mitochondrial oxidation pathway, it translocates the fatty acids in the form of acylcarnitines into the mitochondrial matrix, where the carnitine palmitoyltransferase 2 (CPT-2) activates them to undergo fatty acid beta-oxidation. Catalyzes the unidirectional transport (uniport) of carnitine at lower rates than the antiport (exchange). The chain is Mitochondrial carnitine/acylcarnitine carrier protein from Rattus norvegicus (Rat).